We begin with the raw amino-acid sequence, 277 residues long: Digeranylgeranylglyceryl phosphate synthase (277 aa).

7 helical membrane-spanning segments follow: residues 16–36, 84–104, 107–127, 146–166, 200–220, 221–241, and 257–277; these read ILAG…IPDI, ALYY…FLNI, FVFA…LKPL, GAIG…AFLV, AIIA…PVKV, GIGL…KASI, and LKIA…TKGV.

This sequence belongs to the UbiA prenyltransferase family. DGGGP synthase subfamily. It depends on Mg(2+) as a cofactor.

The protein localises to the cell membrane. It catalyses the reaction sn-3-O-(geranylgeranyl)glycerol 1-phosphate + (2E,6E,10E)-geranylgeranyl diphosphate = 2,3-bis-O-(geranylgeranyl)-sn-glycerol 1-phosphate + diphosphate. It participates in membrane lipid metabolism; glycerophospholipid metabolism. In terms of biological role, prenyltransferase that catalyzes the transfer of the geranylgeranyl moiety of geranylgeranyl diphosphate (GGPP) to the C2 hydroxyl of (S)-3-O-geranylgeranylglyceryl phosphate (GGGP). This reaction is the second ether-bond-formation step in the biosynthesis of archaeal membrane lipids. The polypeptide is Digeranylgeranylglyceryl phosphate synthase (Pyrococcus furiosus (strain ATCC 43587 / DSM 3638 / JCM 8422 / Vc1)).